Here is a 293-residue protein sequence, read N- to C-terminus: Peptidoglycan deacetylase (293 aa).

Asp14, His86, and His90 together coordinate Zn(2+). A NodB homology domain is found at 29–276; that stretch reads PDDISRGLFA…INKHEGVRWV (248 aa).

Belongs to the polysaccharide deacetylase family. Homotetramer.

The enzyme catalyses Deacetylation of xylans and xylo-oligosaccharides.. Its function is as follows. Catalyzes the N-deacetylation of peptidoglycan (PG), an important mechanism that appears to confer lysozyme resistance and to mitigate host immune detection; this likely contributes to pathogen persistence in the host. The exact nature of the residue in PG that is deacetylated has not been determined. Is also able to catalyze the deacetylation of acetylated xylan, and, to a lesser extent, that of chitin and chitosan. Therefore, this enzyme might play a role during infection, considering that xylan-containing carbohydrate structures are among those commonly consumed by humans. The chain is Peptidoglycan deacetylase (pgdA) from Helicobacter pylori (strain ATCC 700392 / 26695) (Campylobacter pylori).